Here is a 475-residue protein sequence, read N- to C-terminus: Equilibrative nucleoside transporter 3 (475 aa).

At 1 to 51 the chain is on the cytoplasmic side; sequence MAFASEDIAYHSSNAVYRVPSNRHEADQEALLGKPLDYPAPGLQRPEDRFN. Position 21 is a phosphoserine (Ser21). The Dileucine internalization motif signature appears at 31–32; the sequence is LL. The helical transmembrane segment at 52-72 threads the bilayer; the sequence is GAYIIFFCLGIGGLLPWNFFV. Topologically, residues 73-105 are extracellular; that stretch reads TAKEYWAFKLRNCSSPASGKDPEDADILNYFES. Residue Asn84 is glycosylated (N-linked (GlcNAc...) asparagine). A helical membrane pass occupies residues 106 to 126; sequence YLAVASTVPSLLFLVANFLLV. The Cytoplasmic segment spans residues 127–132; it reads NRIRVH. A helical membrane pass occupies residues 133–153; sequence VRVLASLSVSLAIFVVMAVLV. The Extracellular portion of the chain corresponds to 154 to 162; it reads RVDTSSWTR. A helical transmembrane segment spans residues 163–183; it reads GFFSIAMACMAIISSSSTIFN. Residues 184–199 lie on the Cytoplasmic side of the membrane; it reads SSVYGLTGSFPMRNAQ. Residues 200 to 220 form a helical membrane-spanning segment; the sequence is ALISGGAMGGTVSAVASLVDL. At 221 to 230 the chain is on the extracellular side; the sequence is AASSDVRDSA. Residues 231–251 traverse the membrane as a helical segment; that stretch reads LAFFLTAAVFLGLCVGLYLLL. Residues 252-305 are Cytoplasmic-facing; that stretch reads PQLEYARYYMRPVVPIHVFSSEDSPPRDAPSTSSVAPASRAVHTPPLGPILKKT. A disordered region spans residues 272 to 291; the sequence is SEDSPPRDAPSTSSVAPASR. The helical transmembrane segment at 306–326 threads the bilayer; it reads AGLGFCAVFLYFITALIFPAI. Residues 327-340 are Extracellular-facing; sequence STNIQPMHKGTGSP. A helical transmembrane segment spans residues 341–361; it reads WTSKFYVPLTVFLLFNFADLC. Residues 362 to 377 lie on the Cytoplasmic side of the membrane; the sequence is GRQVTAWIQVPGPRSK. The chain crosses the membrane as a helical span at residues 378–398; that stretch reads LLPILAVSRVCLVPLFLLCNY. The Extracellular portion of the chain corresponds to 399–414; that stretch reads QPRSHLTLVLFQSDIY. Residues 415–437 form a helical membrane-spanning segment; it reads PILFTCLLGLSNGYLSTLVLMYG. At 438 to 450 the chain is on the cytoplasmic side; it reads PKIVPRELAEATS. A helical membrane pass occupies residues 451-471; sequence VVMLFYMSLGLMLGSACAALL. Over 472-475 the chain is Extracellular; sequence EHFI.

Belongs to the SLC29A/ENT transporter (TC 2.A.57) family. In terms of tissue distribution, widely expressed. Highest levels in heart and liver (at protein level).

It localises to the lysosome membrane. Its subcellular location is the late endosome membrane. It is found in the mitochondrion membrane. The protein resides in the cell membrane. The enzyme catalyses adenosine(in) = adenosine(out). The catalysed reaction is guanosine(in) = guanosine(out). It catalyses the reaction inosine(in) = inosine(out). It carries out the reaction uridine(out) = uridine(in). The enzyme catalyses cytidine(in) = cytidine(out). The catalysed reaction is thymidine(in) = thymidine(out). It catalyses the reaction 2'-deoxyadenosine(in) = 2'-deoxyadenosine(out). It carries out the reaction 2'-deoxycytidine(in) = 2'-deoxycytidine(out). The enzyme catalyses guanine(out) = guanine(in). The catalysed reaction is uracil(in) = uracil(out). It catalyses the reaction (R)-noradrenaline(out) = (R)-noradrenaline(in). It carries out the reaction dopamine(out) = dopamine(in). The enzyme catalyses serotonin(out) = serotonin(in). The catalysed reaction is tyramine(in) = tyramine(out). It catalyses the reaction ATP(in) = ATP(out). In terms of biological role, uniporter that mediates the facilitative transport of nucleoside across lysosomal and mitochondrial membranes. Functions as a non-electrogenic Na(+)-independent transporter. Substrate transport is pH-dependent and enhanced under acidic condition, probably reflecting the location of the transporter in acidic intracellular compartments. Proton is not a cotransporting ion but most likely change the ionization state of the transporter which dictates transport-permissible/impermissible conformation for nucleoside translocation. May direct the nucleoside transport from lysosomes to cytosol or cytosol to mitochondria to facilitate the fundamental function of salvage synthesis of nucleic acids. Involved in the transport of nucleosides (adenosine, guanosine, uridine, thymidine, cytidine and inosine) and deoxynucleosides (deoxyadenosine, deoxycytidine). Also mediates transport of purine nucleobases (adenine, guanine) and pyrimidine nucleobases (uracil). Also able to transport monoamine neurotransmitters dopamine, serotonin, noradrenaline and tyramine. Capable of transporting ATP. Mediates nucleoside export from lysosomes in macrophages, which regulates macrophage functions and numbers. In Rattus norvegicus (Rat), this protein is Equilibrative nucleoside transporter 3.